Here is a 337-residue protein sequence, read N- to C-terminus: Ornithine carbamoyltransferase, catabolic (337 aa).

Carbamoyl phosphate contacts are provided by residues 58–61 (STRT), Q85, R109, and 135–138 (HPTQ). L-ornithine contacts are provided by residues N167, D231, and 235-236 (SM). Carbamoyl phosphate-binding positions include 272–273 (CL) and R317.

It belongs to the aspartate/ornithine carbamoyltransferase superfamily. OTCase family.

It localises to the cytoplasm. It carries out the reaction carbamoyl phosphate + L-ornithine = L-citrulline + phosphate + H(+). It functions in the pathway amino-acid degradation; L-arginine degradation via ADI pathway; carbamoyl phosphate from L-arginine: step 2/2. Reversibly catalyzes the transfer of the carbamoyl group from carbamoyl phosphate (CP) to the N(epsilon) atom of ornithine (ORN) to produce L-citrulline. The polypeptide is Ornithine carbamoyltransferase, catabolic (arcB) (Latilactobacillus sakei (Lactobacillus sakei)).